Reading from the N-terminus, the 356-residue chain is Butyrate kinase 2 (356 aa).

Belongs to the acetokinase family. Homodimer.

It localises to the cytoplasm. It catalyses the reaction butanoate + ATP = butanoyl phosphate + ADP. It functions in the pathway lipid metabolism; butanoate metabolism. Its function is as follows. Catalyzes the conversion of butyryl-CoA through butyryl phosphate to butyrate. In Clostridium acetobutylicum (strain ATCC 824 / DSM 792 / JCM 1419 / IAM 19013 / LMG 5710 / NBRC 13948 / NRRL B-527 / VKM B-1787 / 2291 / W), this protein is Butyrate kinase 2 (buk2).